A 587-amino-acid polypeptide reads, in one-letter code: RuBisCO large subunit-binding protein subunit alpha, chloroplastic (587 aa).

The segment covering 1-25 (MASTNALSSTSILRSPTNQAQTSLS) has biased composition (polar residues). Residues 1 to 33 (MASTNALSSTSILRSPTNQAQTSLSKKVKQHGR) form a disordered region. The transit peptide at 1 to 47 (MASTNALSSTSILRSPTNQAQTSLSKKVKQHGRVNFRQKPNRFVVKA) directs the protein to the chloroplast.

It belongs to the chaperonin (HSP60) family. In terms of assembly, oligomer of probably six alpha and six beta subunits.

The protein resides in the plastid. Its subcellular location is the chloroplast. In terms of biological role, this protein binds RuBisCO small and large subunits and is implicated in the assembly of the enzyme oligomer. This is RuBisCO large subunit-binding protein subunit alpha, chloroplastic from Pisum sativum (Garden pea).